The sequence spans 308 residues: Glutamyl-Q tRNA(Asp) synthetase (308 aa).

L-glutamate-binding positions include 19–23 (RFAPS) and Glu-55. Residues 22 to 32 (PSPSGELHFGS) carry the 'HIGH' region motif. Zn(2+) contacts are provided by Cys-111, Cys-113, Tyr-125, and Cys-129. L-glutamate is bound by residues Tyr-182 and Arg-200. Positions 238-242 (KLSKQ) match the 'KMSKS' region motif. Lys-241 lines the ATP pocket.

Belongs to the class-I aminoacyl-tRNA synthetase family. GluQ subfamily. Requires Zn(2+) as cofactor.

Functionally, catalyzes the tRNA-independent activation of glutamate in presence of ATP and the subsequent transfer of glutamate onto a tRNA(Asp). Glutamate is transferred on the 2-amino-5-(4,5-dihydroxy-2-cyclopenten-1-yl) moiety of the queuosine in the wobble position of the QUC anticodon. In Escherichia coli O6:H1 (strain CFT073 / ATCC 700928 / UPEC), this protein is Glutamyl-Q tRNA(Asp) synthetase.